The following is a 796-amino-acid chain: MSRTMNTNKPEENSTEGDAGKLEWKPKVKDEFKDISIYFSKEEWAEMGEWEKIRYRNVKRNYKMLISIGLRAPRPAFMCYQRQAIKPQINDNEDSDEEWTPKQQVSSPWVPFRVKHSKQQKETPRMPLSDKSSVKEVFGIENLLNTSGSEHAQKPVCSPEEGNTSGQHFGKKLKLRRKNVEVNRYRLRERKDLAYEEVSEPQDDDYLYCEKCQNFFIDSCPNHGPPVFVKDSVVDRGHPNHSVLSLPPGLRIGPSGIPEAGLGVWNEASDLPVGLHFGPYKGQITEDEEAANSGYSWLITKGRNCYEYVDGQDESQANWMRYVNCARDDEEQNLVAFQYHRKIFYRTCRVIRPGRELLVWYGDEYGQELGIKWGSKMKKGFTAGRELRTEIHPCFLCSLAFSSQKFLTQHVEWNHRTEIFPGASARINPKPGDPCPDQLQEHFDSQNKNDKASNEVKRKSKPRHKWTRQRISTAFSSTLKEQMRSEESKRTVEEELRTGQTTNIEDTAKSFIASETSRIERQCGQCFSDKSNVSEHQRTHTGEKPYICRECGRGFSQKSDLIKHQRTHTEEKPYICRECGRGFTQKSDLIKHQRTHTEEKPYICRECGRGFTQKSDLIKHQRTHTGEKPYICRECGRGFTQKSDLIKHQRTHTEEKPYICRECGRGFTQKSSLIRHQRTHTGEKPYICRECGLGFTQKSNLIRHLRTHTGEKPYICRECGLGFTRKSNLIQHQRTHTGEKPYICRECGQGLTWKSSLIQHQRTHTGEKPYICRECGRGFTWKSSLIQHQRTHTVEK.

The tract at residues 1–23 is disordered; it reads MSRTMNTNKPEENSTEGDAGKLE. Residues 27–90 enclose the KRAB-related domain; it reads KVKDEFKDIS…QRQAIKPQIN (64 aa). The disordered stretch occupies residues 149–172; the sequence is SEHAQKPVCSPEEGNTSGQHFGKK. Positions 209, 212, 220, and 223 each coordinate Zn(2+). The 115-residue stretch at 248 to 362 folds into the SET domain; that stretch reads PGLRIGPSGI…PGRELLVWYG (115 aa). Residues 260-262, Tyr295, and 324-325 contribute to the S-adenosyl-L-methionine site; these read AGL and NC. 292 to 298 lines the substrate pocket; it reads NSGYSWL. Substrate is bound at residue Tyr361. An N6,N6,N6-trimethyllysine; alternate modification is found at Lys372. Lys372 carries the N6-methyllysine; alternate modification. Residues Lys376 and Lys378 each carry the N6-methyllysine modification. The C2H2-type 1 zinc finger occupies 392-415; sequence HPCFLCSLAFSSQKFLTQHVEWNH. Residues Cys394, Cys397, His410, and His415 each coordinate Zn(2+). Positions 443–457 are enriched in basic and acidic residues; it reads FDSQNKNDKASNEVK. The disordered stretch occupies residues 443–497; it reads FDSQNKNDKASNEVKRKSKPRHKWTRQRISTAFSSTLKEQMRSEESKRTVEEELR. Residues 458–468 show a composition bias toward basic residues; that stretch reads RKSKPRHKWTR. Over residues 469–480 the composition is skewed to polar residues; the sequence is QRISTAFSSTLK. A compositionally biased stretch (basic and acidic residues) spans 481–497; sequence EQMRSEESKRTVEEELR. The C2H2-type 2; degenerate zinc-finger motif lies at 522 to 540; it reads QCGQCFSDKSNVSEHQRTH. 9 C2H2-type zinc fingers span residues 546 to 568, 574 to 596, 602 to 624, 630 to 652, 658 to 680, 686 to 708, 714 to 736, 742 to 764, and 770 to 792; these read YICRECGRGFSQKSDLIKHQRTH, YICRECGRGFTQKSDLIKHQRTH, YICRECGRGFTQKSSLIRHQRTH, YICRECGLGFTQKSNLIRHLRTH, YICRECGLGFTRKSNLIQHQRTH, YICRECGQGLTWKSSLIQHQRTH, and YICRECGRGFTWKSSLIQHQRTH. Zn(2+) is bound by residues Cys716, Cys719, His732, His736, Cys744, Cys747, His760, His764, Cys772, Cys775, His788, and His792.

The protein belongs to the class V-like SAM-binding methyltransferase superfamily. Homodimer. Interacts with EHMT2 and CDYL; interaction only takes place when PRDM9 is bound to hotspot DNA. Interacts with CXXC1; this interaction does not link PRDM9-activated recombination hotspot sites with DSB machinery and is not required for the hotspot recognition pathway. Forms a complex with EWSR1, REC8, SYCP3 and SYCP1; complex formation is dependent of phosphorylated form of REC8 and requires PRDM9 bound to hotspot DNA; EWSR1 joins PRDM9 with the chromosomal axis through REC8. Mono-methylated; automethylated. Tri-methylated; automethylated. Mono-methylation is predominant; automethylation is lower and slower than H3 peptide methylation and is in a highest S-adenosyl-L-methionine concentration-dependent. There are two major sites for automethylation at Lys-372 and Lys-378. Lysines can be simultaneously methylated, such as Lys-372(me3)/Lys-376(me1), Lys-372(me1)/Lys-378(me1) and Lys-372(me1)/Lys-376(me1)/Lys-378(me1). Automethylation is an intramolecular (cis) process.

It is found in the nucleus. Its subcellular location is the chromosome. It carries out the reaction L-lysyl-[protein] + S-adenosyl-L-methionine = N(6)-methyl-L-lysyl-[protein] + S-adenosyl-L-homocysteine + H(+). The catalysed reaction is N(6)-methyl-L-lysyl-[protein] + S-adenosyl-L-methionine = N(6),N(6)-dimethyl-L-lysyl-[protein] + S-adenosyl-L-homocysteine + H(+). It catalyses the reaction L-lysyl(4)-[histone H3] + 3 S-adenosyl-L-methionine = N(6),N(6),N(6)-trimethyl-L-lysyl(4)-[histone H3] + 3 S-adenosyl-L-homocysteine + 3 H(+). The enzyme catalyses L-lysyl(36)-[histone H3] + 3 S-adenosyl-L-methionine = N(6),N(6),N(6)-trimethyl-L-lysyl(36)-[histone H3] + 3 S-adenosyl-L-homocysteine + 3 H(+). It carries out the reaction L-lysyl(9)-[histone H3] + 3 S-adenosyl-L-methionine = N(6),N(6),N(6)-trimethyl-L-lysyl(9)-[histone H3] + 3 S-adenosyl-L-homocysteine + 3 H(+). The catalysed reaction is L-lysyl(20)-[histone H4] + S-adenosyl-L-methionine = N(6)-methyl-L-lysyl(20)-[histone H4] + S-adenosyl-L-homocysteine + H(+). It catalyses the reaction N(6)-methyl-L-lysyl(20)-[histone H4] + S-adenosyl-L-methionine = N(6),N(6)-dimethyl-L-lysyl(20)-[histone H4] + S-adenosyl-L-homocysteine + H(+). Functionally, histone methyltransferase that sequentially mono-, di-, and tri-methylates both 'Lys-4' (H3K4) and 'Lys-36' (H3K36) of histone H3 to produce respectively trimethylated 'Lys-4' (H3K4me3) and trimethylated 'Lys-36' (H3K36me3) histone H3 and plays a key role in meiotic prophase by determining hotspot localization thereby promoting meiotic recombination. Can also methylate all four core histones with H3 being the best substrate and the most highly modified. Is also able, on one hand, to mono and di-methylate H4K20 and on other hand to trimethylate H3K9 with the di-methylated H3K9 as the best substrate. During meiotic prophase, binds specific DNA sequences through its zinc finger domains thereby determining hotspot localization where it promotes local H3K4me3 and H3K36me3 enrichment on the same nucleosomes through its histone methyltransferase activity. Thereby promotes double-stranded breaks (DSB) formation, at this subset of PRDM9-binding sites, that initiates meiotic recombination for the proper meiotic progression. During meiotic progression hotspot-bound PRDM9 interacts with several complexes; in early leptonema binds CDYL and EHMT2 followed by EWSR1 and CXXC1 by the end of leptonema. EWSR1 joins PRDM9 with the chromosomal axis through REC8. In this way, controls the DSB repair pathway, pairing of homologous chromosomes and sex body formation. Moreover plays a central role in the transcriptional activation of genes during early meiotic prophase thanks to H3K4me3 and H3K36me3 enrichment that represents a specific tag for epigenetic transcriptional activation. In addition performs automethylation. Acetylation and phosphorylation of histone H3 attenuate or prevent histone H3 methylation. In Rattus norvegicus (Rat), this protein is Histone-lysine N-methyltransferase PRDM9.